The following is a 553-amino-acid chain: ATP synthase F(1) complex subunit alpha, mitochondrial (553 aa).

The N-terminal 43 residues, 1 to 43, are a transit peptide targeting the mitochondrion; it reads MLSVRIAAAVARALPRRAGLVSKNALGSSFVGTRNLHASNTRL. Phosphoserine is present on residues Ser-53 and Ser-65. Ser-76 bears the Phosphoserine; alternate mark. An O-linked (GlcNAc) serine; alternate glycan is attached at Ser-76. A Phosphoserine modification is found at Ser-106. Residues Lys-123, Lys-126, and Lys-132 each carry the N6-acetyllysine modification. At Thr-134 the chain carries Phosphothreonine. Lys-161 bears the N6-acetyllysine; alternate mark. Lys-161 is modified (N6-succinyllysine; alternate). Ser-166 is subject to Phosphoserine. Lys-167 bears the N6-acetyllysine; alternate mark. Lys-167 bears the N6-succinyllysine; alternate mark. Ser-184 is modified (phosphoserine). Residue Arg-204 is modified to Omega-N-methylarginine. Positions 215, 217, 218, 219, and 220 each coordinate ATP. Thr-219 is a binding site for Mg(2+). N6-acetyllysine; alternate is present on residues Lys-230 and Lys-239. An N6-succinyllysine; alternate mark is found at Lys-230 and Lys-239. An N6-acetyllysine modification is found at Lys-240. N6-acetyllysine; alternate is present on residues Lys-261 and Lys-305. Lys-261 and Lys-305 each carry N6-succinyllysine; alternate. A Mg(2+)-binding site is contributed by Asp-312. At Lys-427 the chain carries N6-acetyllysine; alternate. Residue Lys-427 is modified to N6-succinyllysine; alternate. The residue at position 434 (Lys-434) is an N6-acetyllysine. 2 residues coordinate ATP: Gln-473 and Gln-475. N6-acetyllysine; alternate occurs at positions 498, 506, 531, and 539. 4 positions are modified to N6-succinyllysine; alternate: Lys-498, Lys-506, Lys-531, and Lys-539. Lys-541 is modified (N6-acetyllysine).

Belongs to the ATPase alpha/beta chains family. As to quaternary structure, homotrimer. Component of the ATP synthase complex composed at least of ATP5F1A/subunit alpha, ATP5F1B/subunit beta, ATP5MC1/subunit c (homooctomer), MT-ATP6/subunit a, MT-ATP8/subunit 8, ATP5ME/subunit e, ATP5MF/subunit f, ATP5MG/subunit g, ATP5MK/subunit k, ATP5MJ/subunit j, ATP5F1C/subunit gamma, ATP5F1D/subunit delta, ATP5F1E/subunit epsilon, ATP5PF/subunit F6, ATP5PB/subunit b, ATP5PD/subunit d, ATP5PO/subunit OSCP. ATP synthase complex consists of a soluble F(1) head domain (subunits alpha(3) and beta(3)) - the catalytic core - and a membrane F(0) domain - the membrane proton channel (subunits c, a, 8, e, f, g, k and j). These two domains are linked by a central stalk (subunits gamma, delta, and epsilon) rotating inside the F1 region and a stationary peripheral stalk (subunits F6, b, d, and OSCP). Interacts with ATPAF2. Interacts with HRG; the interaction occurs on the surface of T-cells and alters the cell morphology when associated with concanavalin (in vitro). Interacts with PLG (angiostatin peptide); the interaction inhibits most of the angiogenic properties of angiostatin. Interacts with BLOC1S1. Interacts with BCL2L1 isoform BCL-X(L); the interaction mediates the association of BCL2L1 isoform BCL-X(L) with the mitochondrial membrane F(1)F(0) ATP synthase and enhances neurons metabolic efficiency. Interacts with CLN5 and PPT1. Interacts with S100A1; this interaction increases F1-ATPase activity. Interacts with ABCB7; this interaction allows the regulation of cellular iron homeostasis and cellular reactive oxygen species (ROS) levels in cardiomyocytes. Acetylated on lysine residues. BLOC1S1 is required for acetylation. As to expression, expressed in flagella of epididymal sperm.

It localises to the mitochondrion. Its subcellular location is the mitochondrion inner membrane. It is found in the cell membrane. Functionally, subunit alpha, of the mitochondrial membrane ATP synthase complex (F(1)F(0) ATP synthase or Complex V) that produces ATP from ADP in the presence of a proton gradient across the membrane which is generated by electron transport complexes of the respiratory chain. ATP synthase complex consist of a soluble F(1) head domain - the catalytic core - and a membrane F(1) domain - the membrane proton channel. These two domains are linked by a central stalk rotating inside the F(1) region and a stationary peripheral stalk. During catalysis, ATP synthesis in the catalytic domain of F(1) is coupled via a rotary mechanism of the central stalk subunits to proton translocation. In vivo, can only synthesize ATP although its ATP hydrolase activity can be activated artificially in vitro. With the catalytic subunit beta (ATP5F1B), forms the catalytic core in the F(1) domain. Subunit alpha does not bear the catalytic high-affinity ATP-binding sites. The sequence is that of ATP synthase F(1) complex subunit alpha, mitochondrial from Rattus norvegicus (Rat).